The sequence spans 447 residues: Tryptophan synthase beta chain (447 aa).

N6-(pyridoxal phosphate)lysine is present on K92. The segment at 408 to 447 is disordered; it reads GLAVKGGEQPKEFSDGPPLGKLAPSGGSAVREATSVGARK.

It belongs to the TrpB family. Tetramer of two alpha and two beta chains. Requires pyridoxal 5'-phosphate as cofactor.

The enzyme catalyses (1S,2R)-1-C-(indol-3-yl)glycerol 3-phosphate + L-serine = D-glyceraldehyde 3-phosphate + L-tryptophan + H2O. Its pathway is amino-acid biosynthesis; L-tryptophan biosynthesis; L-tryptophan from chorismate: step 5/5. Functionally, the beta subunit is responsible for the synthesis of L-tryptophan from indole and L-serine. In Polaromonas sp. (strain JS666 / ATCC BAA-500), this protein is Tryptophan synthase beta chain.